Here is a 512-residue protein sequence, read N- to C-terminus: MFLQTALLLLSLGVAEPDCNTKTATGPYILDRYKPKPVTVSKKLYSATRYTTSAQNELLTAGYRTAWVAYCYNGGLVDSNTGCNARLLHYPPSRDELLLWGSSHQCSYGDICHDCWGSDSYACLGQLDPAKHWAPRKELVRRDANWKFAYHMCNIDWRCGVTTSPVFFNLQWVKNEVKVSTLLPNGSTVEHSAGEPLFWTEKDFSYLVKDNFEIQREEVKISCFVDPDYWVGERKTKKAFCQDGTNFFEVTSHQFCHQYACYNFSKDELLEAVYKERAHEKSKDLPFGNKSWTVVTASIDDLHALSAAQAFELEGLRASFAELDSRFRQLSEILDTVISSIAKIDERLIGRLIKAPVSSRFISEDKFLLHQCVDSVANNTNCVGDSAYVDGRWTHVGDNHPCTTVVDEPIGIDIYNFSALWYPSAAEVDFRGTVQSEDGWSFVVKSKDALIQTMMYTKNGGKGTSLTDLLDYPSGWLKGQLGGLLYGNIGVYLLIAFAFVLLIRLIKSAGLC.

Positions 1–15 (MFLQTALLLLSLGVA) are cleaved as a signal peptide. Residues N185, N263, N289, N378, and N416 are each glycosylated (N-linked (GlcNAc...) asparagine; by host). A helical transmembrane segment spans residues 479–502 (GQLGGLLYGNIGVYLLIAFAFVLL).

The protein localises to the virion membrane. In terms of biological role, attaches the virus to host cellular receptor and later induces fusion of virion with host membrane. This is Envelope glycoprotein from Thogoto virus (isolate SiAr 126) (Tho).